The following is a 309-amino-acid chain: Tyrosine recombinase XerD (309 aa).

Positions 3–88 (MRASLAIENF…ALRQFFRFLY (86 aa)) constitute a Core-binding (CB) domain. The Tyr recombinase domain maps to 109–302 (PLPKIMSVEN…LEERLHKLVS (194 aa)). Catalysis depends on residues Arg-158, Lys-182, His-254, Arg-257, and His-280. Catalysis depends on Tyr-289, which acts as the O-(3'-phospho-DNA)-tyrosine intermediate.

Belongs to the 'phage' integrase family. XerD subfamily. Forms a cyclic heterotetrameric complex composed of two molecules of XerC and two molecules of XerD.

The protein localises to the cytoplasm. Functionally, site-specific tyrosine recombinase, which acts by catalyzing the cutting and rejoining of the recombining DNA molecules. The XerC-XerD complex is essential to convert dimers of the bacterial chromosome into monomers to permit their segregation at cell division. It also contributes to the segregational stability of plasmids. In Brucella melitensis biotype 1 (strain ATCC 23456 / CCUG 17765 / NCTC 10094 / 16M), this protein is Tyrosine recombinase XerD.